A 135-amino-acid polypeptide reads, in one-letter code: Universal stress protein Aq_178 (135 aa).

Belongs to the universal stress protein A family.

The protein is Universal stress protein Aq_178 of Aquifex aeolicus (strain VF5).